The following is a 406-amino-acid chain: Purine nucleoside permease (406 aa).

Residues 1-22 form the signal peptide; the sequence is MKLSTLFTLATTISTLTTFTIA.

It belongs to the NUP family. Predicted to be a substrate for cleavage by KEX2.

With respect to regulation, mammalian nucleoside transport inhibitors dipyridamole and NBMPR inhibit adenosine transport by NUP. Nucleoside permease that transports adenosine and guanosine. Does not show any transport activities towards cytidine, adenine, guanine, uridine, and uracil. The polypeptide is Purine nucleoside permease (Candida albicans (strain SC5314 / ATCC MYA-2876) (Yeast)).